We begin with the raw amino-acid sequence, 249 residues long: Phosphate import ATP-binding protein PstB (249 aa).

One can recognise an ABC transporter domain in the interval 3–244; sequence IEANDVHVYY…PKKKRTQNYI (242 aa). 35–42 provides a ligand contact to ATP; it reads GPSGCGKS.

The protein belongs to the ABC transporter superfamily. Phosphate importer (TC 3.A.1.7) family. The complex is composed of two ATP-binding proteins (PstB), two transmembrane proteins (PstC and PstA) and a solute-binding protein (PstS).

The protein resides in the cell inner membrane. It catalyses the reaction phosphate(out) + ATP + H2O = ADP + 2 phosphate(in) + H(+). Functionally, part of the ABC transporter complex PstSACB involved in phosphate import. Responsible for energy coupling to the transport system. The sequence is that of Phosphate import ATP-binding protein PstB from Cytophaga hutchinsonii (strain ATCC 33406 / DSM 1761 / CIP 103989 / NBRC 15051 / NCIMB 9469 / D465).